The chain runs to 402 residues: MSRLVSFASLLAAVNAHGYVQNIVVNGVYYSGWEINTYPYMTDPPVVAAWQIPNSNGPVDVSNGYTTEDIICNLNATNAAGYVEVAAGDKINLQWSAWPDTHHGPVISYLADCGDDCTTVDKTTLEFFKIDAVGLVDDSTVPGTWGDDELIENNNSWMVEIPTSIAPGNYVLRHEIIALHSAGTEGGAQNYPQCFNLKVTGSGTDSPAGTLGTELYNLDDPGILVNIYASLSTYVIPGPTLYSGATSIAQATSAITATGSATSGAGGAAATGSSAATTTAAAASTTATPTTAAAQTAKSASAPSSAATGSVPAAPTTATVSTTTSIATSVGTTLTRTTLATTTTAAAAEPSASAPAPSGNSASGSNPLYAQCGGLNFKGASGCVAGATCKKMNPYYSQCVSA.

A signal peptide spans 1 to 16 (MSRLVSFASLLAAVNA). Cu(2+) is bound at residue His17. 2 disulfides stabilise this stretch: Cys72-Cys194 and Cys113-Cys117. N-linked (GlcNAc...) asparagine glycosylation is present at Asn75. His102 lines the Cu(2+) pocket. A glycan (N-linked (GlcNAc...) asparagine) is linked at Asn154. O2 is bound by residues His180 and Gln189. Tyr191 contacts Cu(2+). The region spanning 364–400 (GSNPLYAQCGGLNFKGASGCVAGATCKKMNPYYSQCV) is the CBM1 domain.

Belongs to the polysaccharide monooxygenase AA9 family. Cu(2+) is required as a cofactor.

The protein resides in the secreted. The enzyme catalyses [(1-&gt;4)-beta-D-glucosyl]n+m + reduced acceptor + O2 = 4-dehydro-beta-D-glucosyl-[(1-&gt;4)-beta-D-glucosyl]n-1 + [(1-&gt;4)-beta-D-glucosyl]m + acceptor + H2O.. Lytic polysaccharide monooxygenase (LPMO) that depolymerizes crystalline and amorphous polysaccharides via the oxidation of scissile alpha- or beta-(1-4)-glycosidic bonds, yielding C1 or C4 oxidation products. Catalysis by LPMOs requires the reduction of the active-site copper from Cu(II) to Cu(I) by a reducing agent and H(2)O(2) or O(2) as a cosubstrate. This is AA9 family lytic polysaccharide monooxygenase E from Emericella nidulans (strain FGSC A4 / ATCC 38163 / CBS 112.46 / NRRL 194 / M139) (Aspergillus nidulans).